The sequence spans 252 residues: Carbonic anhydrase (252 aa).

Positions 1–26 (MPRFPRTLPRLTAVLLLACTAFSAAA) are cleaved as a signal peptide. The 222-residue stretch at 31–252 (THWGYTGHDS…QPLNARVVIE (222 aa)) folds into the Alpha-carbonic anhydrase domain. The cysteines at positions 54 and 207 are disulfide-linked. H92 acts as the Proton acceptor in catalysis. Positions 118, 120, and 137 each coordinate Zn(2+). 203–204 (TT) lines the substrate pocket.

This sequence belongs to the alpha-carbonic anhydrase family. Homodimer. Zn(2+) is required as a cofactor.

Its subcellular location is the periplasm. The catalysed reaction is hydrogencarbonate + H(+) = CO2 + H2O. Functionally, reversible hydration of carbon dioxide. This is Carbonic anhydrase (cah) from Neisseria gonorrhoeae.